The chain runs to 341 residues: Delta(1)-pyrroline-2-carboxylate/Delta(1)-piperideine-2-carboxylate reductase (341 aa).

S52 acts as the Charge relay system in catalysis. Catalysis depends on H53, which acts as the Proton donor. R57 is a substrate binding site. Position 125-129 (125-129) interacts with NADP(+); sequence HFAAL. T165 lines the substrate pocket. Residue 183–185 coordinates NADP(+); that stretch reads DMA. Residue 191–192 coordinates substrate; sequence HG. The active-site Charge relay system is D193. NADP(+) is bound by residues 235-236 and 308-314; these read HK and RMPGERR.

Belongs to the LDH2/MDH2 oxidoreductase family. Homodimer.

It carries out the reaction L-pipecolate + NADP(+) = Delta(1)-piperideine-2-carboxylate + NADPH + H(+). The enzyme catalyses L-proline + NADP(+) = 1-pyrroline-2-carboxylate + NADPH + H(+). The catalysed reaction is N-methyl-L-alanine + NADP(+) + H2O = methylamine + pyruvate + NADPH + H(+). Is inhibited by the substrate analog pyrrole-2-carboxylate, but not by N-formylphenylalanine. In terms of biological role, catalyzes the reduction of both Delta(1)-pyrroline-2-carboxylate (Pyr2C) and Delta(1)-piperideine-2-carboxylate (Pip2C) to L-proline and L-pipecolate, respectively, using NADPH as the electron donor. Can use NADH instead of NADPH, although with much less efficiency. Plays an essential role in the catabolism of D-proline and D-lysine, which allows P.putida to grow on each of these amino-acids as a sole carbon source; D-lysine appears to be catabolized only through the pipecolate pathway. Can also catalyze the reverse oxidation reactions, albeit at a much lower rate. To a lesser extent, is able to catalyze in vitro the NADPH-dependent formation of N-alkyl-L-amino acids from the corresponding alpha-oxo acids and alkylamines, e.g. the formation of N-methylalanine from pyruvate and N-methylamine; cannot use ammonia as substrate for these reductive amination reactions. Shows neither malate dehydrogenase nor lactate dehydrogenase activity. The polypeptide is Delta(1)-pyrroline-2-carboxylate/Delta(1)-piperideine-2-carboxylate reductase (Pseudomonas putida (Arthrobacter siderocapsulatus)).